The following is a 284-amino-acid chain: 2-dehydro-3-deoxyphosphooctonate aldolase (284 aa).

The protein belongs to the KdsA family.

Its subcellular location is the cytoplasm. It carries out the reaction D-arabinose 5-phosphate + phosphoenolpyruvate + H2O = 3-deoxy-alpha-D-manno-2-octulosonate-8-phosphate + phosphate. It participates in carbohydrate biosynthesis; 3-deoxy-D-manno-octulosonate biosynthesis; 3-deoxy-D-manno-octulosonate from D-ribulose 5-phosphate: step 2/3. It functions in the pathway bacterial outer membrane biogenesis; lipopolysaccharide biosynthesis. The sequence is that of 2-dehydro-3-deoxyphosphooctonate aldolase from Pseudoalteromonas translucida (strain TAC 125).